The following is a 159-amino-acid chain: Ribosomal RNA large subunit methyltransferase H (159 aa).

S-adenosyl-L-methionine contacts are provided by residues Leu-76, Gly-108, and Phe-127 to Leu-132.

This sequence belongs to the RNA methyltransferase RlmH family. In terms of assembly, homodimer.

The protein resides in the cytoplasm. The catalysed reaction is pseudouridine(1915) in 23S rRNA + S-adenosyl-L-methionine = N(3)-methylpseudouridine(1915) in 23S rRNA + S-adenosyl-L-homocysteine + H(+). In terms of biological role, specifically methylates the pseudouridine at position 1915 (m3Psi1915) in 23S rRNA. In Bacillus thuringiensis subsp. konkukian (strain 97-27), this protein is Ribosomal RNA large subunit methyltransferase H.